The following is a 429-amino-acid chain: uncharacterized protein (429 aa).

Transmembrane regions (helical) follow at residues 27–47 (PFFF…QSIG), 48–68 (GIMT…VSIL), 78–98 (ILLC…YWVF), 106–126 (IFIL…FLAL), 142–162 (ALII…PAII), 198–218 (LLLA…TIVI), 219–239 (AILT…CFYF), 249–269 (VLLS…YFLD), 288–308 (FIVG…FGYL), 351–371 (LILD…IYFI), and 399–419 (FFIS…LIIL).

The protein resides in the cell membrane. Its function is as follows. May function as a transporter. This is an uncharacterized protein from Klebsiella pneumoniae.